A 771-amino-acid chain; its full sequence is Hyperosmolality-gated Ca2+ permeable channel 1.3 (771 aa).

A helical transmembrane segment spans residues 7-27 (IGVAAAINILTAIIFLLAFAI). The residue at position 54 (S54) is a Phosphoserine. 9 helical membrane passes run 101-121 (IYLI…SILV), 158-178 (FWTH…VLMK), 375-395 (LIMH…IAFV), 427-447 (FLPG…LMVM), 467-487 (YYIF…SAFE), 512-532 (ATFF…GEIL), 584-604 (PVTP…YLVF), 630-650 (IISA…TKGA), and 651-671 (AQST…HRYC). A disordered region spans residues 744-771 (VPTKRQSRINTPAVSHASRGSSRSPPSK). The span at 751–771 (RINTPAVSHASRGSSRSPPSK) shows a compositional bias: polar residues.

This sequence belongs to the CSC1 (TC 1.A.17) family. Post-translationally, phosphorylated at Ser-54 by BIK1 in response to pathogen-associated molecular pattern (PAMP) perception, promoting its activation. Preferentially expressed in guard cells.

The protein resides in the cell membrane. It catalyses the reaction Ca(2+)(in) = Ca(2+)(out). With respect to regulation, activated following phosphorylation at Ser-54 by BIK1. Its function is as follows. Calcium-permeable channel that plays a key role in plant stomatal immunity. In response to pathogen-associated molecular pattern (PAMP) perception, phosphorylated and activated by BIK1, triggering rapid influx of calcium ions across the plasma membrane, leading to stomatal closure. The protein is Hyperosmolality-gated Ca2+ permeable channel 1.3 of Arabidopsis thaliana (Mouse-ear cress).